A 748-amino-acid chain; its full sequence is Translation factor GUF1 homolog 1, mitochondrial (748 aa).

The transit peptide at 1–29 (MRVGCCLLLKPIRQRLCTASISSRHIMRW) directs the protein to the mitochondrion. The tr-type G domain occupies 94–276 (SHIRNFAVVA…AIIERVPPPT (183 aa)). GTP contacts are provided by residues 103-110 (AHVDHGKT), 167-171 (DTPGH), and 221-224 (TKMD).

This sequence belongs to the TRAFAC class translation factor GTPase superfamily. Classic translation factor GTPase family. LepA subfamily.

It localises to the mitochondrion inner membrane. The catalysed reaction is GTP + H2O = GDP + phosphate + H(+). Promotes mitochondrial protein synthesis. May act as a fidelity factor of the translation reaction, by catalyzing a one-codon backward translocation of tRNAs on improperly translocated ribosomes. Binds to mitochondrial ribosomes in a GTP-dependent manner. The polypeptide is Translation factor GUF1 homolog 1, mitochondrial (Trypanosoma cruzi (strain CL Brener)).